The following is a 337-amino-acid chain: Ribosomal RNA small subunit methyltransferase C (337 aa).

Belongs to the methyltransferase superfamily. RsmC family. As to quaternary structure, monomer.

It localises to the cytoplasm. It carries out the reaction guanosine(1207) in 16S rRNA + S-adenosyl-L-methionine = N(2)-methylguanosine(1207) in 16S rRNA + S-adenosyl-L-homocysteine + H(+). Its function is as follows. Specifically methylates the guanine in position 1207 of 16S rRNA in the 30S particle. This chain is Ribosomal RNA small subunit methyltransferase C, found in Acinetobacter baumannii (strain ACICU).